A 241-amino-acid chain; its full sequence is Probable pectate lyase D (241 aa).

The first 17 residues, 1-17 (MYQKSLLFSLLATSALA), serve as a signal peptide directing secretion. Asn215 carries an N-linked (GlcNAc...) asparagine glycan. The disordered stretch occupies residues 215-241 (NNSGDEPEEVSEGPSDACQYSEPLSSC).

The protein belongs to the polysaccharide lyase 3 family. Ca(2+) serves as cofactor.

It localises to the secreted. It catalyses the reaction Eliminative cleavage of (1-&gt;4)-alpha-D-galacturonan to give oligosaccharides with 4-deoxy-alpha-D-galact-4-enuronosyl groups at their non-reducing ends.. In terms of biological role, pectinolytic enzyme consist of four classes of enzymes: pectin lyase, polygalacturonase, pectin methylesterase and rhamnogalacturonase. Among pectinolytic enzymes, pectin lyase is the most important in depolymerization of pectin, since it cleaves internal glycosidic bonds of highly methylated pectins. Favors pectate, the anion, over pectin, the methyl ester. The chain is Probable pectate lyase D (plyD) from Neosartorya fischeri (strain ATCC 1020 / DSM 3700 / CBS 544.65 / FGSC A1164 / JCM 1740 / NRRL 181 / WB 181) (Aspergillus fischerianus).